The sequence spans 377 residues: Glutamate 5-kinase (377 aa).

Lysine 20 is a binding site for ATP. Positions 60, 147, and 159 each coordinate substrate. Position 179-180 (179-180 (TD)) interacts with ATP. Positions 285–363 (AGRLVIDDGA…DKVYQVLGEA (79 aa)) constitute a PUA domain.

The protein belongs to the glutamate 5-kinase family.

It is found in the cytoplasm. It carries out the reaction L-glutamate + ATP = L-glutamyl 5-phosphate + ADP. It participates in amino-acid biosynthesis; L-proline biosynthesis; L-glutamate 5-semialdehyde from L-glutamate: step 1/2. In terms of biological role, catalyzes the transfer of a phosphate group to glutamate to form L-glutamate 5-phosphate. The polypeptide is Glutamate 5-kinase (Acinetobacter baumannii (strain SDF)).